The primary structure comprises 123 residues: Small ribosomal subunit protein uS13 (123 aa).

Positions 93–123 (HRKGLPVRGQNTKNNARTRKGPAKAIAGKKK) are disordered. A compositionally biased stretch (basic residues) spans 108-123 (ARTRKGPAKAIAGKKK).

This sequence belongs to the universal ribosomal protein uS13 family. Part of the 30S ribosomal subunit. Forms a loose heterodimer with protein S19. Forms two bridges to the 50S subunit in the 70S ribosome.

Located at the top of the head of the 30S subunit, it contacts several helices of the 16S rRNA. In the 70S ribosome it contacts the 23S rRNA (bridge B1a) and protein L5 of the 50S subunit (bridge B1b), connecting the 2 subunits; these bridges are implicated in subunit movement. Contacts the tRNAs in the A and P-sites. The polypeptide is Small ribosomal subunit protein uS13 (Leuconostoc mesenteroides subsp. mesenteroides (strain ATCC 8293 / DSM 20343 / BCRC 11652 / CCM 1803 / JCM 6124 / NCDO 523 / NBRC 100496 / NCIMB 8023 / NCTC 12954 / NRRL B-1118 / 37Y)).